The chain runs to 224 residues: UPF0111 protein TC_0063 (224 aa).

The protein belongs to the UPF0111 family.

The sequence is that of UPF0111 protein TC_0063 from Chlamydia muridarum (strain MoPn / Nigg).